A 698-amino-acid chain; its full sequence is Transcription factor cwo (698 aa).

The interval 62–75 (QDPLSHRIIEKRRR) is basic motif; degenerate. Residues 62–117 (QDPLSHRIIEKRRRDRMNSCLADLSRLIPPQYQRKGRGRIEKTEIIEMAIRHLKHL) form the bHLH domain. The helix-loop-helix motif stretch occupies residues 76–117 (DRMNSCLADLSRLIPPQYQRKGRGRIEKTEIIEMAIRHLKHL). The region spanning 128–159 (YRSGYMDCMKEAAKFLYDVHMQDFCHRLLGRL) is the Orange domain. 2 disordered regions span residues 257–319 (SSPA…ASST) and 349–369 (STAP…FESS). Positions 280-318 (APPAADNVPSNSTGSGSAAACAGGNSNSSGSNSSNAASS) are enriched in low complexity. The span at 359-369 (TDSSHHDFESS) shows a compositional bias: basic and acidic residues.

As to expression, expressed in adult brain where it is detected in the dorsal lateral neurons, small and large ventral lateral neurons and dorsal neurons 1, 2 and 3 (at protein level). Expressed at constant levels in a 12 hour light / 12 hour day cycle (at protein level). Strongly expressed in pacemaker neurons. In adults, mRNA expression oscillates in a circadian manner with a peak at around 14 hour Zeitgeber time. mRNA levels oscillate in a rhythmic manner in both 12 hour light / 12 hour dark and constant dark conditions with a morning peak around the time of lights-on and an evening peak around the time of lights-off in light/dark conditions. During stage 8 of embryonic development, expressed in the anterior and posterior midgut primordia and expression in the gut continues throughout embryonic development. During germ band retraction, expression is initiated in many tissues in a prominent segmentally repeated pattern. Later, expression is ubiquitous but has higher levels in segmentally repeated clusters of cells. Expression is also found in cells of the amnioserosa, in the head region, in posterior spiracles and in tracheal trees.

It localises to the nucleus. Plays a role in the regulation of circadian rhythms. Transcriptional repressor which inhibits Clock-mediated transcriptional activation by binding to E boxes in the promoters of Clock target genes and repressing their transcription. E box binding activity is time-dependent with higher binding activity seen in the early morning (zeitgeber time 2) than early evening (zeitgeber time 14) and is dependent on the presence of the circadian protein per. It is likely that per binds to Clock-cycle heterodimers, reducing their affinity for E box binding and allowing cwo to bind instead. Negatively regulates its own expression. The protein is Transcription factor cwo of Drosophila melanogaster (Fruit fly).